Consider the following 804-residue polypeptide: uncharacterized protein (804 aa).

10 helical membrane-spanning segments follow: residues 15–35, 243–263, 301–321, 333–353, 381–401, 403–423, 453–473, 680–700, 734–754, and 769–789; these read LLIV…LGNI, FLLL…AVAM, LSAV…MVLL, SLWP…LVGL, FYLP…MGGS, LLWA…VLGW, TLSQ…LLVL, ALEV…LAQV, MLGF…LAVL, and LWIV…GWLG.

This sequence belongs to the ABC-4 integral membrane protein family.

The protein localises to the cell membrane. This is an uncharacterized protein from Escherichia coli (strain K12).